The chain runs to 195 residues: Guanylate kinase (195 aa).

Residues 5–183 (GILFVISGPS…ALQKITAIII (179 aa)) form the Guanylate kinase-like domain. 12 to 19 (GPSGVGKG) contributes to the ATP binding site.

The protein belongs to the guanylate kinase family.

It localises to the cytoplasm. The enzyme catalyses GMP + ATP = GDP + ADP. In terms of biological role, essential for recycling GMP and indirectly, cGMP. This Syntrophomonas wolfei subsp. wolfei (strain DSM 2245B / Goettingen) protein is Guanylate kinase.